We begin with the raw amino-acid sequence, 376 residues long: 1-acyl-sn-glycerol-3-phosphate acyltransferase gamma (376 aa).

Topologically, residues 1-124 (MGLLAFLKTQ…LGSSKVLAKK (124 aa)) are cytoplasmic. An HXXXXD motif motif is present at residues 96–101 (HNFEID). A helical membrane pass occupies residues 125–145 (ELLYVPLIGWTWYFLEIVFCK). The Lumenal segment spans residues 146-316 (RKWEEDRDTV…TLLNFLSWAT (171 aa)). A helical membrane pass occupies residues 317-339 (ILLSPLFSFVLGVFASGSPLLIL). The Cytoplasmic portion of the chain corresponds to 340-376 (TFLGFVGAASFGVRRLIGVTEIEKGSSYGNQEFKKKE).

This sequence belongs to the 1-acyl-sn-glycerol-3-phosphate acyltransferase family.

It localises to the endoplasmic reticulum membrane. It is found in the nucleus envelope. It carries out the reaction a 1-acyl-sn-glycero-3-phosphate + an acyl-CoA = a 1,2-diacyl-sn-glycero-3-phosphate + CoA. The catalysed reaction is pentadecanoyl-CoA + 1-(9Z-octadecenoyl)-sn-glycero-3-phosphate = 1-(9Z)-octadecenoyl-2-pentadecanoyl-sn-glycero-3-phosphate + CoA. It catalyses the reaction heptadecanoyl-CoA + 1-(9Z-octadecenoyl)-sn-glycero-3-phosphate = 1-(9Z)-octadecenoyl-2-heptadecanoyl-sn-glycero-3-phosphate + CoA. The enzyme catalyses 1-(9Z-octadecenoyl)-sn-glycero-3-phosphate + octadecanoyl-CoA = 1-(9Z-octadecenoyl)-2-octadecanoyl-sn-glycero-3-phosphate + CoA. It carries out the reaction nonadecanoyl-CoA + 1-(9Z-octadecenoyl)-sn-glycero-3-phosphate = 1-(9Z)-octadecenoyl-2-nonadecanoyl-sn-glycero-3-phosphate + CoA. The catalysed reaction is 1-(9Z-octadecenoyl)-sn-glycero-3-phosphate + (5Z,8Z,11Z,14Z)-eicosatetraenoyl-CoA = 1-(9Z)-octadecenoyl-2-(5Z,8Z,11Z,14Z)-eicosatetraenoyl-sn-glycero-3-phosphate + CoA. It catalyses the reaction 1-(9Z-octadecenoyl)-sn-glycero-3-phosphate + (9Z)-octadecenoyl-CoA = 1,2-di-(9Z-octadecenoyl)-sn-glycero-3-phosphate + CoA. The enzyme catalyses 1-(9Z-octadecenoyl)-sn-glycero-3-phosphate + (9Z,12Z)-octadecadienoyl-CoA = 1-(9Z)-octadecenoyl-2-(9Z,12Z)-octadecadienoyl-sn-glycero-3-phosphate + CoA. It carries out the reaction 1-(9Z-octadecenoyl)-sn-glycero-3-phosphocholine + (5Z,8Z,11Z,14Z)-eicosatetraenoyl-CoA = 1-(9Z)-octadecenoyl-2-(5Z,8Z,11Z,14Z)-icosatetraenoyl-sn-glycero-3-phosphocholine + CoA. The catalysed reaction is 1-(9Z-octadecenoyl)-sn-glycero-3-phospho-(1D-myo-inositol) + (5Z,8Z,11Z,14Z)-eicosatetraenoyl-CoA = 1-(9Z-octadecenoyl)-2-(5Z,8Z,11Z,14Z-eicosatetraenoyl)-sn-glycero-3-phospho-1D-myo-inositol + CoA. It catalyses the reaction 1-(9Z-octadecenoyl)-sn-glycero-3-phospho-L-serine + (5Z,8Z,11Z,14Z)-eicosatetraenoyl-CoA = 1-(9Z-octadecenoyl)-2-(5Z,8Z,11Z,14Z-eicosatetraenoyl)-sn-glycero-3-phospho-L-serine + CoA. The enzyme catalyses 1-hexadecanoyl-sn-glycero-3-phosphate + (9Z)-octadecenoyl-CoA = 1-hexadecanoyl-2-(9Z-octadecenoyl)-sn-glycero-3-phosphate + CoA. It carries out the reaction 1-hexadecanoyl-sn-glycero-3-phosphate + (5Z,8Z,11Z,14Z)-eicosatetraenoyl-CoA = 1-hexadecanoyl-2-(5Z,8Z,11Z,14Z-eicosatetraenoyl)-sn-glycero-3-phosphate + CoA. The catalysed reaction is 1-heptadecanoyl-sn-glycero-3-phosphate + (5Z,8Z,11Z,14Z)-eicosatetraenoyl-CoA = 1-heptadecanoyl-2-(5Z,8Z,11Z,14Z)-eicosatetraenoyl-sn-glycero-3-phosphate + CoA. It catalyses the reaction 1-octadecanoyl-sn-glycero-3-phosphate + (9Z)-octadecenoyl-CoA = 1-octadecanoyl-2-(9Z-octadecenoyl)-sn-glycero-3-phosphate + CoA. The enzyme catalyses 1-octadecanoyl-sn-glycero-3-phosphate + (5Z,8Z,11Z,14Z)-eicosatetraenoyl-CoA = 1-octadecanoyl-2-(5Z,8Z,11Z,14Z-eicosatetraenoyl)-sn-glycero-3-phosphate + CoA. It carries out the reaction 1-(9Z-octadecenoyl)-sn-glycero-3-phosphate + hexadecanoyl-CoA = 1-hexadecanoyl-2-(9Z-octadecenoyl)-sn-glycero-3-phosphate + CoA. The catalysed reaction is 1-O-(9Z-octadecenyl)-sn-glycero-3-phosphate + (5Z,8Z,11Z,14Z)-eicosatetraenoyl-CoA = 1-O-(9Z-octadecenyl)-2-(5Z,8Z,11Z,14Z-eicosatetraenoyl)-sn-glycero-3-phosphate + CoA. It catalyses the reaction a 1-acyl-sn-glycero-3-phospho-(1D-myo-inositol) + (5Z,8Z,11Z,14Z)-eicosatetraenoyl-CoA = a 1-acyl-2-(5Z,8Z,11Z,14Z-eicosatetraenoyl)-sn-glycero-3-phospho-(1D-myo-inositol) + CoA. It participates in phospholipid metabolism; CDP-diacylglycerol biosynthesis; CDP-diacylglycerol from sn-glycerol 3-phosphate: step 2/3. Its function is as follows. Converts 1-acyl-sn-glycerol-3-phosphate (lysophosphatidic acid or LPA) into 1,2-diacyl-sn-glycerol-3-phosphate (phosphatidic acid or PA) by incorporating an acyl moiety at the sn-2 position of the glycerol backbone. Acts on LPA containing saturated or unsaturated fatty acids C16:0-C20:4 at the sn-1 position using C18:1, C20:4 or C18:2-CoA as the acyl donor. Also acts on lysophosphatidylcholine, lysophosphatidylinositol and lysophosphatidylserine using C18:1 or C20:4-CoA. Has a preference for arachidonoyl-CoA as a donor. Also has a modest lysophosphatidylinositol acyltransferase (LPIAT) activity, converts lysophosphatidylinositol (LPI) into phosphatidylinositol. This Pongo abelii (Sumatran orangutan) protein is 1-acyl-sn-glycerol-3-phosphate acyltransferase gamma (AGPAT3).